The following is a 216-amino-acid chain: Elongation factor Ts (216 aa).

The involved in Mg(2+) ion dislocation from EF-Tu stretch occupies residues 81–84; it reads TDFV.

The protein belongs to the EF-Ts family.

The protein localises to the cytoplasm. Associates with the EF-Tu.GDP complex and induces the exchange of GDP to GTP. It remains bound to the aminoacyl-tRNA.EF-Tu.GTP complex up to the GTP hydrolysis stage on the ribosome. The sequence is that of Elongation factor Ts from Geotalea uraniireducens (strain Rf4) (Geobacter uraniireducens).